The sequence spans 789 residues: DNA topoisomerase 4 subunit A (789 aa).

The Topo IIA-type catalytic domain maps to 34–499 (LPDLRDGLKP…EKQKVQDSDF (466 aa)). Residue Tyr-122 is the O-(5'-phospho-DNA)-tyrosine intermediate of the active site.

The protein belongs to the type II topoisomerase GyrA/ParC subunit family. ParC type 2 subfamily. Heterotetramer composed of ParC and ParE.

Its subcellular location is the cell membrane. The catalysed reaction is ATP-dependent breakage, passage and rejoining of double-stranded DNA.. In terms of biological role, topoisomerase IV is essential for chromosome segregation. It relaxes supercoiled DNA. Performs the decatenation events required during the replication of a circular DNA molecule. The polypeptide is DNA topoisomerase 4 subunit A (Mycoplasma pneumoniae (strain ATCC 29342 / M129 / Subtype 1) (Mycoplasmoides pneumoniae)).